Here is a 306-residue protein sequence, read N- to C-terminus: tRNA pseudouridine synthase B (306 aa).

The Nucleophile role is filled by Asp43.

Belongs to the pseudouridine synthase TruB family. Type 1 subfamily.

The enzyme catalyses uridine(55) in tRNA = pseudouridine(55) in tRNA. Responsible for synthesis of pseudouridine from uracil-55 in the psi GC loop of transfer RNAs. This chain is tRNA pseudouridine synthase B, found in Anaplasma marginale (strain St. Maries).